The sequence spans 124 residues: Kinocilin (124 aa).

2 helical membrane-spanning segments follow: residues 13-33 (LQLACVALGLVAGSIIIGISV) and 40-60 (MGGVFIGAAVLGLLILAYPFL). Positions 80 to 124 (PHPGADHGEGRSSTNGNKEGARSSLSTVSRTLEKLKPGTRGAEEC) are disordered. The span at 90 to 109 (RSSTNGNKEGARSSLSTVSR) shows a compositional bias: polar residues. Residues 110–124 (TLEKLKPGTRGAEEC) show a composition bias toward basic and acidic residues.

It localises to the membrane. Its function is as follows. May play a role in stabilizing dense microtubular networks or in vesicular trafficking. The polypeptide is Kinocilin (KNCN) (Homo sapiens (Human)).